The following is a 326-amino-acid chain: Organic solute transporter subunit alpha (326 aa).

The Extracellular portion of the chain corresponds to 1 to 28; the sequence is METSNFTLFDPRCRAEAPFAIDAIKQLD. Asparagine 5 is a glycosylation site (N-linked (GlcNAc...) asparagine). Residues 29-49 form a helical membrane-spanning segment; sequence IFGKVLYTVLTLMATASMLVF. Residues 50–67 lie on the Cytoplasmic side of the membrane; it reads IEECIYIYKKVPAHKKST. Residues 68–88 form a helical membrane-spanning segment; the sequence is IIWVTGVAPVMAIMSCLGMWV. Residues 89 to 99 are Extracellular-facing; that stretch reads PRATMFTDMTS. A helical membrane pass occupies residues 100-120; it reads ATYFAIVVFKFLILMIEEVGG. The Cytoplasmic portion of the chain corresponds to 121–161; sequence DNAFLRRCEKQTFKISTGPCCCCCPCLPNVPITRRSLFILK. Residues 162–182 form a helical membrane-spanning segment; sequence LGSYQFALMKLVLTIFSIVLW. The Extracellular segment spans residues 183–198; sequence TNGSFSLTNVSASGAA. Asparagine 184 and asparagine 191 each carry an N-linked (GlcNAc...) asparagine glycan. Residues 199–219 traverse the membrane as a helical segment; sequence IWINSFIGVLTIIALWPVAIM. Residues 220–237 are Cytoplasmic-facing; it reads FMHVREALRTLKIVPKYA. Residues 238 to 258 form a helical membrane-spanning segment; that stretch reads MYQLVLILSQLQTAIINILAL. Residue asparagine 259 is glycosylated (N-linked (GlcNAc...) asparagine). At 259-275 the chain is on the extracellular side; sequence NGTIACSPPYSSQARGY. Residues 276 to 296 traverse the membrane as a helical segment; it reads MMSQQLLIVEMFIITLVTRVL. Topologically, residues 297–326 are cytoplasmic; the sequence is YRRQYEPIPEPDDVEEKKTVLSSKKAIDVA.

This sequence belongs to the OST-alpha family. As to quaternary structure, interacts with slc51b. The Ost-alpha/Ost-beta complex is a heterodimer composed of alpha (slc51a) and beta (slc51b) subunit.

Its subcellular location is the cell membrane. It is found in the endoplasmic reticulum membrane. It catalyses the reaction taurocholate(out) = taurocholate(in). The catalysed reaction is prostaglandin E2(out) = prostaglandin E2(in). The enzyme catalyses estrone 3-sulfate(out) = estrone 3-sulfate(in). It carries out the reaction dehydroepiandrosterone 3-sulfate(out) = dehydroepiandrosterone 3-sulfate(in). It catalyses the reaction tauroursodeoxycholate(out) = tauroursodeoxycholate(in). The catalysed reaction is glycoursodeoxycholate(out) = glycoursodeoxycholate(in). The enzyme catalyses glycocholate(out) = glycocholate(in). It carries out the reaction taurochenodeoxycholate(out) = taurochenodeoxycholate(in). It catalyses the reaction glycochenodeoxycholate(out) = glycochenodeoxycholate(in). The catalysed reaction is taurodeoxycholate(out) = taurodeoxycholate(in). The enzyme catalyses glycodeoxycholate(out) = glycodeoxycholate(in). Its function is as follows. Essential component of the Ost-alpha/Ost-beta complex, a heterodimer that acts as the intestinal basolateral transporter responsible for the translocation of bile acids (such as taurocholate), steroids (such as estrone sulfate), and eicosanoids (such as prostaglandin E2). The polypeptide is Organic solute transporter subunit alpha (slc51a) (Danio rerio (Zebrafish)).